Here is an 872-residue protein sequence, read N- to C-terminus: Sine oculis-binding protein homolog (872 aa).

Residues 1 to 14 (MAEMEKEGRPPENK) show a composition bias toward basic and acidic residues. A disordered region spans residues 1 to 26 (MAEMEKEGRPPENKRSRKPAHPVKRE). FCS-type zinc fingers lie at residues 142–180 (DDVS…KCFA) and 216–256 (FKNN…KCLN). Disordered stretches follow at residues 308–354 (RRKA…KSMP), 411–484 (FIRG…PGAP), and 550–619 (KPPN…GRSE). Residues 319–344 (GQSQGPGPSASTTVSPSDTANCSVTK) are compositionally biased toward polar residues. A compositionally biased stretch (low complexity) spans 417 to 433 (HHASNPNSPLSNPMLPG). Pro residues predominate over residues 460 to 484 (IHPPSTPTMPGNPPGLLPPPPPGAP). The SUMO interaction motif 1 (SIM); mediates the binding to polysumoylated substrates signature appears at 620–624 (VVDLT). Ser-629 is modified (phosphoserine). The SUMO interaction motif 2 (SIM); mediates the binding to polysumoylated substrates motif lies at 651–655 (VIDLT). A Glycyl lysine isopeptide (Lys-Gly) (interchain with G-Cter in SUMO2) cross-link involves residue Lys-675. Ser-697 bears the Phosphoserine mark. Residues 728–770 (AAEGAKGAEPPPEQPPPPPPPPPAPPKKLLSPEEPAVSELESV) are disordered. The span at 736–753 (EPPPEQPPPPPPPPPAPP) shows a compositional bias: pro residues.

It belongs to the SOBP family. Interacts (via SIM domains) with SUMO1 and SUMO2.

Functionally, implicated in development of the cochlea. The polypeptide is Sine oculis-binding protein homolog (Bos taurus (Bovine)).